The primary structure comprises 346 residues: SUMO-activating enzyme subunit 1 (346 aa).

At M1 the chain carries N-acetylmethionine. An N-acetylvaline; in SUMO-activating enzyme subunit 1, N-terminally processed modification is found at V2. S12 is subject to Phosphoserine. The residue at position 198 (K198) is an N6-acetyllysine.

Belongs to the ubiquitin-activating E1 family. In terms of assembly, heterodimer of SAE1 and UBA2/SAE2. The heterodimer corresponds to the two domains that are encoded on a single polypeptide chain in ubiquitin-activating enzyme E1. Interacts with UBE2I. Expression level increases during S phase and drops in G2 phase (at protein level).

It localises to the nucleus. Its pathway is protein modification; protein sumoylation. The heterodimer acts as an E1 ligase for SUMO1, SUMO2, SUMO3, and probably SUMO4. It mediates ATP-dependent activation of SUMO proteins followed by formation of a thioester bond between a SUMO protein and a conserved active site cysteine residue on UBA2/SAE2. In Homo sapiens (Human), this protein is SUMO-activating enzyme subunit 1 (SAE1).